A 408-amino-acid chain; its full sequence is FAD-dependent monooxygenase nscC (408 aa).

Residues Met1–Ala20 form the signal peptide. FAD-binding residues include Glu34 and Ala45. Residues Asn91 and Asn103 are each glycosylated (N-linked (GlcNAc...) asparagine). Arg119 provides a ligand contact to FAD. Asn170 and Asn231 each carry an N-linked (GlcNAc...) asparagine glycan. Residues Asp328 and Gly341 each contribute to the FAD site.

It belongs to the paxM FAD-dependent monooxygenase family. Requires FAD as cofactor.

Its pathway is secondary metabolite biosynthesis. Functionally, FAD-dependent monooxygenase; part of the gene cluster that mediates the biosynthesis of neosartoricin, a prenylated anthracenone that exhibits T-cell antiproliferative activity, suggestive of a physiological role as an immunosuppressive agent. The non-reducing polyketide synthase nscA probably synthesizes and cyclizes the decaketide backbone. The hydrolase nscB then mediates the product release through hydrolysis followed by spontaneous decarboxylation. The prenyltransferase nscD catalyzes the addition of the dimethylallyl group to the aromatic C5. The FAD-dependent monooxygenase nscC is then responsible for the stereospecific hydroxylation at C2. There is no gene encoding O-acetyltransferase in the nsc gene cluster; thus, the last step of 2-O-acetylation leading to neosartoricin may be catalyzed by an unidentified O-acetyltransferase. The sequence is that of FAD-dependent monooxygenase nscC from Neosartorya fischeri (strain ATCC 1020 / DSM 3700 / CBS 544.65 / FGSC A1164 / JCM 1740 / NRRL 181 / WB 181) (Aspergillus fischerianus).